A 103-amino-acid chain; its full sequence is UPF0145 protein EF_0241 (103 aa).

Belongs to the UPF0145 family.

This is UPF0145 protein EF_0241 from Enterococcus faecalis (strain ATCC 700802 / V583).